Reading from the N-terminus, the 186-residue chain is Peptidyl-tRNA hydrolase (186 aa).

TRNA is bound at residue tyrosine 16. Catalysis depends on histidine 21, which acts as the Proton acceptor. The tRNA site is built by tyrosine 66, asparagine 68, and asparagine 114.

This sequence belongs to the PTH family. Monomer.

Its subcellular location is the cytoplasm. It catalyses the reaction an N-acyl-L-alpha-aminoacyl-tRNA + H2O = an N-acyl-L-amino acid + a tRNA + H(+). Functionally, hydrolyzes ribosome-free peptidyl-tRNAs (with 1 or more amino acids incorporated), which drop off the ribosome during protein synthesis, or as a result of ribosome stalling. In terms of biological role, catalyzes the release of premature peptidyl moieties from peptidyl-tRNA molecules trapped in stalled 50S ribosomal subunits, and thus maintains levels of free tRNAs and 50S ribosomes. This chain is Peptidyl-tRNA hydrolase, found in Ureaplasma urealyticum serovar 10 (strain ATCC 33699 / Western).